A 217-amino-acid chain; its full sequence is Probable GTP-binding protein EngB (217 aa).

One can recognise an EngB-type G domain in the interval 37–214; the sequence is SGLEVAFAGR…RAAMARLIGD (178 aa). GTP-binding positions include 45-52, 72-76, 92-95, 159-162, and 193-195; these read GRSNVGKS, GRTQE, DMPG, TKAD, and TSS. Mg(2+)-binding residues include serine 52 and threonine 74.

Belongs to the TRAFAC class TrmE-Era-EngA-EngB-Septin-like GTPase superfamily. EngB GTPase family. Requires Mg(2+) as cofactor.

Functionally, necessary for normal cell division and for the maintenance of normal septation. The polypeptide is Probable GTP-binding protein EngB (Nitrobacter winogradskyi (strain ATCC 25391 / DSM 10237 / CIP 104748 / NCIMB 11846 / Nb-255)).